A 71-amino-acid polypeptide reads, in one-letter code: Protein translocase subunit SecE (71 aa).

The chain crosses the membrane as a helical span at residues 43–63; the sequence is VAGVGILAVGAIGFIIYVLLT.

Belongs to the SecE/SEC61-gamma family. In terms of assembly, component of the Sec protein translocase complex. Heterotrimer consisting of SecY (alpha), SecG (beta) and SecE (gamma) subunits. The heterotrimers can form oligomers, although 1 heterotrimer is thought to be able to translocate proteins. Interacts with the ribosome. May interact with SecDF, and other proteins may be involved.

It is found in the cell membrane. Essential subunit of the Sec protein translocation channel SecYEG. Clamps together the 2 halves of SecY. May contact the channel plug during translocation. In Methanosarcina barkeri (strain Fusaro / DSM 804), this protein is Protein translocase subunit SecE.